The following is a 1374-amino-acid chain: Alpha,alpha-trehalose-phosphate synthase [UDP-forming] 1 (1374 aa).

3 disordered regions span residues 28–66, 86–117, and 1352–1374; these read DTGK…SDKD, YTPG…DDEG, and KADS…SKQQ. Basic and acidic residues-rich tracts occupy residues 56 to 66 and 86 to 95; these read DPFDRPKSDKD and YTPGKEKGVD. Composition is skewed to acidic residues over residues 96 to 109 and 1356 to 1368; these read QDES…EDHD and YYDD…DQED.

It in the N-terminal section; belongs to the glycosyltransferase 20 family. In the C-terminal section; belongs to the gob-1 trehalose phosphatase family.

It catalyses the reaction D-glucose 6-phosphate + UDP-alpha-D-glucose = alpha,alpha-trehalose 6-phosphate + UDP + H(+). Its function is as follows. Catalyzes the production of trehalose from glucose-6-phosphate and UDP-alpha-D-glucose in a 2 step process. This chain is Alpha,alpha-trehalose-phosphate synthase [UDP-forming] 1 (tps-1), found in Caenorhabditis briggsae.